A 204-amino-acid chain; its full sequence is Protease (204 aa).

Residues histidine 53, aspartate 70, and cysteine 121 contribute to the active site.

The protein belongs to the peptidase C5 family. Interacts with protease cofactor pVI-C; this interaction is necessary for protease activation.

The protein resides in the virion. Its subcellular location is the host nucleus. It catalyses the reaction Cleaves proteins of the adenovirus and its host cell at two consensus sites: -Yaa-Xaa-Gly-Gly-|-Xaa- and -Yaa-Xaa-Gly-Xaa-|-Gly- (in which Yaa is Met, Ile or Leu, and Xaa is any amino acid).. Its activity is regulated as follows. Requires DNA and protease cofactor for maximal activation. Inside nascent virions, becomes partially activated by binding to the viral DNA, allowing it to cleave the cofactor that binds to the protease and fully activates it. Actin, like the viral protease cofactor, seems to act as a cofactor in the cleavage of cytokeratin 18 and of actin itself. Cleaves viral precursor proteins (pTP, pIIIa, pVI, pVII, pVIII, and pX) inside newly assembled particles giving rise to mature virions. Protease complexed to its cofactor slides along the viral DNA to specifically locate and cleave the viral precursors. Mature virions have a weakened organization compared to the unmature virions, thereby facilitating subsequent uncoating. Without maturation, the particle lacks infectivity and is unable to uncoat. Late in adenovirus infection, in the cytoplasm, may participate in the cytoskeleton destruction. Cleaves host cell cytoskeletal keratins K7 and K18. This chain is Protease, found in Porcine adenovirus A serotype 3 (PAdV-3).